Reading from the N-terminus, the 585-residue chain is Protein-lysine N-methyltransferase EFM1 (585 aa).

Positions 23–281 constitute an SET domain; that stretch reads PKISFRITED…AQDELFNNYG (259 aa). Tyr-280 is an S-adenosyl-L-methionine binding site.

The protein belongs to the class V-like SAM-binding methyltransferase superfamily. RKM1 family.

The protein resides in the cytoplasm. Its function is as follows. S-adenosyl-L-methionine-dependent protein-lysine N-methyltransferase that monomethylates elongation factor 1-alpha (TEF1/TEF2) at 'Lys-30'. The chain is Protein-lysine N-methyltransferase EFM1 from Saccharomyces cerevisiae (strain ATCC 204508 / S288c) (Baker's yeast).